A 792-amino-acid chain; its full sequence is Serine/threonine-protein kinase Nek4 (792 aa).

Residues 6-261 (YCYMRVVGRG…VRSILRQPYI (256 aa)) form the Protein kinase domain. Residues 12 to 20 (VGRGSYGEV) and Lys-35 contribute to the ATP site. Asp-131 acts as the Proton acceptor in catalysis. A Phosphothreonine; by autocatalysis modification is found at Thr-165. Disordered regions lie at residues 329–358 (QEKP…NTGE), 379–515 (ANAG…LPSY), 527–611 (QQND…SITQ), and 628–657 (LSED…TNEM). Phosphoserine occurs at positions 340 and 343. Composition is skewed to polar residues over residues 412–421 (QGNTKSSDQP), 456–467 (DQVTGIIENQDS), 473–484 (QPHSSMSEPSLS), 496–505 (AHSGTKSQFQ), and 541–551 (VNSSRTSSTAS). The residue at position 566 (Lys-566) is an N6-methyllysine. The span at 602-611 (RFSSDCSITQ) shows a compositional bias: polar residues. The segment covering 641 to 657 (DKSDGDSREGKSHTNEM) has biased composition (basic and acidic residues). Position 675 is a phosphoserine (Ser-675).

The protein belongs to the protein kinase superfamily. NEK Ser/Thr protein kinase family. NIMA subfamily. Requires Mn(2+) as cofactor. In terms of tissue distribution, expressed ubiquitously among various organs and is up-regulated in the testis.

It localises to the cytoplasm. The protein localises to the cell projection. It is found in the cilium. It carries out the reaction L-seryl-[protein] + ATP = O-phospho-L-seryl-[protein] + ADP + H(+). The enzyme catalyses L-threonyl-[protein] + ATP = O-phospho-L-threonyl-[protein] + ADP + H(+). In terms of biological role, required for normal entry into proliferative arrest after a limited number of cell divisions, also called replicative senescence. Required for normal cell cycle arrest in response to double-stranded DNA damage. Protein kinase that seems to act exclusively upon threonine residues. This chain is Serine/threonine-protein kinase Nek4 (Nek4), found in Mus musculus (Mouse).